The sequence spans 325 residues: GMP reductase (325 aa).

Residue C173 is the Thioimidate intermediate of the active site. Residue 202–225 participates in NADP(+) binding; it reads IIADGGIRSHGDIAKSVRFGATMV.

It belongs to the IMPDH/GMPR family. GuaC type 2 subfamily.

It catalyses the reaction IMP + NH4(+) + NADP(+) = GMP + NADPH + 2 H(+). Functionally, catalyzes the irreversible NADPH-dependent deamination of GMP to IMP. It functions in the conversion of nucleobase, nucleoside and nucleotide derivatives of G to A nucleotides, and in maintaining the intracellular balance of A and G nucleotides. In Delftia acidovorans (strain DSM 14801 / SPH-1), this protein is GMP reductase.